The primary structure comprises 127 residues: Arginine decarboxylase proenzyme (127 aa).

The active-site Schiff-base intermediate with substrate; via pyruvic acid is serine 72. Serine 72 is modified (pyruvic acid (Ser); by autocatalysis). Residue histidine 77 is the Proton acceptor; for processing activity of the active site. Cysteine 92 functions as the Proton donor; for catalytic activity in the catalytic mechanism.

The protein belongs to the prokaryotic AdoMetDC family. Type 1 subfamily. In terms of assembly, heterooctamer of four alpha and four beta chains arranged as a tetramer of alpha/beta heterodimers. Pyruvate is required as a cofactor. Is synthesized initially as an inactive proenzyme. Formation of the active enzyme involves a self-maturation process in which the active site pyruvoyl group is generated from an internal serine residue via an autocatalytic post-translational modification. Two non-identical subunits are generated from the proenzyme in this reaction, and the pyruvate is formed at the N-terminus of the alpha chain, which is derived from the carboxyl end of the proenzyme. The post-translation cleavage follows an unusual pathway, termed non-hydrolytic serinolysis, in which the side chain hydroxyl group of the serine supplies its oxygen atom to form the C-terminus of the beta chain, while the remainder of the serine residue undergoes an oxidative deamination to produce ammonia and the pyruvoyl group blocking the N-terminus of the alpha chain.

It catalyses the reaction L-arginine + H(+) = agmatine + CO2. The protein operates within amine and polyamine biosynthesis; agmatine biosynthesis; agmatine from L-arginine: step 1/1. Specifically catalyzes the decarboxylation of L-arginine to agmatine. Has no S-adenosylmethionine decarboxylase (AdoMetDC) activity. The sequence is that of Arginine decarboxylase proenzyme from Staphylothermus marinus (strain ATCC 43588 / DSM 3639 / JCM 9404 / F1).